Here is a 388-residue protein sequence, read N- to C-terminus: DNA ADP-ribosyl transferase-DNA ADP-ribosyl glycohydrolase fusion protein (388 aa).

The region spanning 6-197 (RELYYITHID…PVIPDPTFFF (192 aa)) is the DarT domain. Residues 10-12 (YIT) and Arg50 contribute to the NAD(+) site. The segment at 34 to 52 (QSINCKKVYDNSIVLKRKS) is NAD(+)-binding element. Arg50 serves as the catalytic Proton acceptor. The segment at 107-152 (TDGNAASSETQIYRKSEIKNIKNIISVKDMEYWREEDGSKRKIMAE) is ADP-ribosylating turn-turn loop. Glu152 is a catalytic residue. In terms of domain architecture, Macro spans 196 to 376 (FFLPNREIKL…IYLPLEKRIP (181 aa)). Residues 215-216 (DM), 227-229 (SVN), Thr301, 339-343 (GCGLG), and 371-372 (LE) each bind ADP-D-ribose.

In the N-terminal section; belongs to the DarT ADP-ribosyltransferase family. It in the C-terminal section; belongs to the DarG ADP-ribosyl glycohydrolase family.

It catalyses the reaction an N-(ADP-alpha-D-ribosyl)-thymidine in DNA + H2O = a thymidine in DNA + ADP-D-ribose. The enzyme catalyses a thymidine in DNA + NAD(+) = an N-(ADP-alpha-D-ribosyl)-thymidine in DNA + nicotinamide + H(+). Functionally, a fusion protein of the toxic and antitoxin components of a hybrid type II/IV toxin-antitoxin (TA) system. The N-terminal domain ADP-ribosylates ssDNA on a thymidine residue, while the C-terminal domain removes the modification, neutralizing the toxic effect. The sequence is that of DNA ADP-ribosyl transferase-DNA ADP-ribosyl glycohydrolase fusion protein from Thermosipho africanus (strain H17ap60334).